The chain runs to 212 residues: Protein G1-like7 (212 aa).

Low complexity predominate over residues 1–22 (MDPSGPGPSSAAAGGAPAVAAA). Disordered stretches follow at residues 1-34 (MDPSGPGPSSAAAGGAPAVAAAPQPPAQLSRYES) and 148-212 (KARG…PSAS). The ALOG domain occupies 31 to 158 (RYESQKRRDW…ARGIPYEKKK (128 aa)). A Nuclear localization signal motif is present at residues 156 to 160 (KKKRK). A compositionally biased stretch (low complexity) spans 173–182 (SGSSSAAAAA). Residues 183–194 (AGGGDTGSGGGA) show a composition bias toward gly residues.

Belongs to the plant homeotic and developmental regulators ALOG protein family.

It is found in the nucleus. In terms of biological role, probable transcription regulator that acts as a developmental regulator by promoting cell growth in response to light. This Oryza sativa subsp. indica (Rice) protein is Protein G1-like7.